A 227-amino-acid polypeptide reads, in one-letter code: Lectin (227 aa).

Residues 1-28 (MTMTSTTTKAMAMAAAVLAAAAVAATNA) form the signal peptide. Position 29 is a pyrrolidone carboxylic acid (glutamine 29). Chitin-binding type-1 domains lie at 29-70 (QTCG…ACCS), 71-113 (SQRC…PCRA), 114-156 (DIKC…ACCP), and 157-199 (EKRC…GCYK). 16 disulfide bridges follow: cysteine 31-cysteine 46, cysteine 40-cysteine 52, cysteine 45-cysteine 59, cysteine 63-cysteine 68, cysteine 74-cysteine 89, cysteine 83-cysteine 95, cysteine 88-cysteine 102, cysteine 106-cysteine 111, cysteine 117-cysteine 132, cysteine 126-cysteine 138, cysteine 131-cysteine 145, cysteine 149-cysteine 154, cysteine 160-cysteine 175, cysteine 169-cysteine 181, cysteine 174-cysteine 188, and cysteine 192-cysteine 197. Residue 38-40 (MIC) coordinates substrate. Substrate is bound at residue 90–101 (SQYGYCGFGSEY). Substrate is bound at residue 142-143 (SE). The propeptide occupies 202–227 (DGMAAILANNQSVSFEGIIESVAELV). Asparagine 211 is a glycosylation site (N-linked (GlcNAc...) asparagine).

Confined to root caps, several cell layers at the periphery of the coleorhiza and radicle, and in all cell layers of the coleoptile.

N-acetyl-D-glucosamine binding lectin. This is Lectin from Oryza sativa subsp. japonica (Rice).